The primary structure comprises 598 residues: Transcriptional repressor tup12 (598 aa).

A disordered region spans residues 118 to 177 (IASGVVPQSSKTKHGRNSVSFGKYGNAGPFNSDNSSKPLILNNGSSGGTPKNLRSPAIDS). WD repeat units follow at residues 285 to 325 (EPPI…AMVF), 332 to 371 (LITL…QQIR), 374 to 413 (DIAQ…RTVC), 415 to 454 (WDVE…KVIR), 456 to 495 (WTSS…NTIK), 510 to 549 (YKEG…RTIQ), and 552 to 585 (SPDS…ATGS).

This sequence belongs to the WD repeat TUP1 family.

Transcriptional repressor. This Schizosaccharomyces pombe (strain 972 / ATCC 24843) (Fission yeast) protein is Transcriptional repressor tup12 (tup12).